Consider the following 1896-residue polypeptide: Obscurin-like protein 1 (1896 aa).

Ser10 bears the Phosphoserine mark. The Ig-like 1 domain occupies 12-100 (PCFLRFPRPV…GEAYAAAAVT (89 aa)). Residues 17 to 19 (FPR) are interaction with TTN. A disulfide bond links Cys33 and Cys84. The interaction with TTN stretch occupies residues 85–94 (RARNAAGEAY). The disordered stretch occupies residues 106–127 (ASDPELQPAERPLPSPGSGEGA). Ig-like domains are found at residues 128–225 (PVFL…ALLQ), 243–330 (PVVE…QTLS), and 339–425 (PRLR…ANVT). 3 disulfide bridges follow: Cys149–Cys209, Cys267–Cys319, and Cys362–Cys412. Residues 517–615 (PPGPPILAEM…FHGSAHLVPT (99 aa)) form the Fibronectin type-III domain. Ig-like domains are found at residues 714 to 800 (PVHI…FGVT), 804 to 893 (PPVH…VTIT), 902 to 982 (PSGK…FTVT), 986 to 1075 (PPVR…VTVT), 1078 to 1172 (PERI…PPVQ), 1174 to 1261 (LALE…FTVQ), 1265 to 1357 (PPVR…VEEP), 1357 to 1534 (PLLV…ARLS), 1628 to 1720 (PVTI…RTVA), and 1794 to 1896 (PAQS…VEGN). Disulfide bonds link Cys738–Cys788, Cys829–Cys879, Cys920–Cys970, Cys1011–Cys1061, Cys1103–Cys1153, and Cys1195–Cys1245. 2 disulfides stabilise this stretch: Cys1381/Cys1522 and Cys1650/Cys1700.

As to quaternary structure, component of the 3M complex, composed of core components CUL7, CCDC8 and OBSL1. Interacts with CCDC8. Interacts with CUL7; the interaction is direct. Interacts with FBXW8. Interacts (via N-terminal Ig-like domain) with TTN/titin (via C-terminal Ig-like domain); the interaction is direct. In terms of tissue distribution, widely expressed, with predominant levels found in the heart.

It localises to the cytoplasm. It is found in the cytoskeleton. The protein resides in the microtubule organizing center. Its subcellular location is the centrosome. The protein localises to the perinuclear region. It localises to the golgi apparatus. Its function is as follows. Core component of the 3M complex, a complex required to regulate microtubule dynamics and genome integrity. It is unclear how the 3M complex regulates microtubules, it could act by controlling the level of a microtubule stabilizer. Acts as a regulator of the Cul7-RING(FBXW8) ubiquitin-protein ligase, playing a critical role in the ubiquitin ligase pathway that regulates Golgi morphogenesis and dendrite patterning in brain. Required to localize CUL7 to the Golgi apparatus in neurons. This Homo sapiens (Human) protein is Obscurin-like protein 1.